Consider the following 656-residue polypeptide: Tetratricopeptide repeat protein 30 homolog (656 aa).

TPR repeat units lie at residues 9–42, 43–76, 141–174, 176–208, 238–271, 378–412, 416–449, 451–484, and 537–570; these read EGEF…NPKN, LAAL…FPQY, AAVI…SGYQ, GLAY…GVKD, IEAF…NEHD, RKTA…DDSL, LPVL…CKEH, TWKL…KYDD, and SIIS…PEKK.

Belongs to the TTC30/dfy-1/fleer family. As to quaternary structure, component of the IFT complex B composed of at least che-2, che-13, dyf-1, dyf-3, dyf-6, dyf-11, dyf-13, ift-20, ift-74, ift-81, ifta-2, osm-1, osm-5 and osm-6. In terms of tissue distribution, expressed in most amphid, both phasmid and several labial-quadrant neurons.

It is found in the cell projection. It localises to the cilium. In terms of biological role, plays a role in anterograde intraflagellar transport (IFT), the process by which cilia precursors are transported from the base of the cilium to the site of their incorporation at the tip. Specifically required for the kinesin osm-3 to dock onto and move the IFT particles which contain these precursors. Component of the intraflagellar transport (IFT) complex B required for transport of proteins in the motile cilium. May be required for ciliary entrance and transport of specific ciliary cargo proteins such as che-3 which are related to motility. Required for polyglutamylation of axonemal tubulin in sensory cilia. The sequence is that of Tetratricopeptide repeat protein 30 homolog from Caenorhabditis elegans.